A 253-amino-acid chain; its full sequence is Rab GTPase-activating protein 1-like, isoform 10 (253 aa).

A coiled-coil region spans residues serine 8 to serine 222. The disordered stretch occupies residues threonine 233–threonine 253.

This is Rab GTPase-activating protein 1-like, isoform 10 (RABGAP1L) from Homo sapiens (Human).